The primary structure comprises 353 residues: Uroporphyrinogen decarboxylase (353 aa).

Substrate contacts are provided by residues 30–34, aspartate 79, tyrosine 154, serine 209, and histidine 332; that span reads RQAGR.

The protein belongs to the uroporphyrinogen decarboxylase family. As to quaternary structure, homodimer.

It localises to the cytoplasm. The catalysed reaction is uroporphyrinogen III + 4 H(+) = coproporphyrinogen III + 4 CO2. It participates in porphyrin-containing compound metabolism; protoporphyrin-IX biosynthesis; coproporphyrinogen-III from 5-aminolevulinate: step 4/4. Its function is as follows. Catalyzes the decarboxylation of four acetate groups of uroporphyrinogen-III to yield coproporphyrinogen-III. This is Uroporphyrinogen decarboxylase from Mycobacterium marinum (strain ATCC BAA-535 / M).